Reading from the N-terminus, the 583-residue chain is Alpha-1,3-arabinosyltransferase XAT2 (583 aa).

Residues 1-21 are Cytoplasmic-facing; sequence MKPVERAKLVRSLRQESRRLR. A helical; Signal-anchor for type II membrane protein membrane pass occupies residues 22–42; that stretch reads LLVLVIGFFLVTLTFVVISKP. The Lumenal segment spans residues 43–583; sequence DALLFNLNGR…LLEVLDQLNQ (541 aa). The tract at residues 73–178 is disordered; that stretch reads RRSADTFPAA…NGKQEDGKPN (106 aa). Composition is skewed to basic and acidic residues over residues 102-121 and 135-146; these read TSEE…KNEE and EDNKNGEEEGHT. Over residues 149–160 the composition is skewed to polar residues; sequence SKVTLPTVSNYT. N-linked (GlcNAc...) asparagine glycosylation is present at asparagine 158. A compositionally biased stretch (basic and acidic residues) spans 162 to 178; it reads RDAEDTDNGKQEDGKPN. Residues asparagine 229, asparagine 382, asparagine 450, and asparagine 485 are each glycosylated (N-linked (GlcNAc...) asparagine).

It belongs to the glycosyltransferase 61 family.

The protein resides in the golgi apparatus membrane. It functions in the pathway glycan metabolism. In terms of biological role, glycosyltransferase involved in the arabinosylation of xylan, the major hemicellulose (non-cellulosic component) of primary and secondary walls of angiosperms. Possesses alpha-1,3-arabinosyltransferase activity, transferring an arabinofuranose residue to the xylan backbone. In Oryza sativa subsp. japonica (Rice), this protein is Alpha-1,3-arabinosyltransferase XAT2.